The primary structure comprises 208 residues: Probable GTP-binding protein EngB (208 aa).

The EngB-type G domain occupies 23 to 205; sequence LTSEMVILGR…RQTLLKYLLT (183 aa). Residues 31–38, 57–61, 84–87, 154–157, and 182–184 each bind GTP; these read GRSNVGKS, GKTRL, DLPG, TKFD, and FNA. Positions 38 and 59 each coordinate Mg(2+).

The protein belongs to the TRAFAC class TrmE-Era-EngA-EngB-Septin-like GTPase superfamily. EngB GTPase family. Mg(2+) serves as cofactor.

Necessary for normal cell division and for the maintenance of normal septation. In Helicobacter pylori (strain P12), this protein is Probable GTP-binding protein EngB.